The chain runs to 434 residues: Trigger factor (434 aa).

Residues 161-246 (EDRVTVDFNG…LKKVEERELP (86 aa)) enclose the PPIase FKBP-type domain.

Belongs to the FKBP-type PPIase family. Tig subfamily.

It localises to the cytoplasm. It catalyses the reaction [protein]-peptidylproline (omega=180) = [protein]-peptidylproline (omega=0). Its function is as follows. Involved in protein export. Acts as a chaperone by maintaining the newly synthesized protein in an open conformation. Functions as a peptidyl-prolyl cis-trans isomerase. The protein is Trigger factor of Proteus mirabilis (strain HI4320).